Consider the following 307-residue polypeptide: MITVSAPAKVNLHLEVLGLRSDGFHELAMVMQSIDLADRLSFQNTADAQLSLTCDDASLSVGDDNLILRAAQLLRDRSGFSELGASIHLEKRIPIGAGLAGGSSDGAAALVGLNALWGLGHSTADLERMAAELGSDMPFCVAGGCQLCFGRGEQLEAVPPTPQPLAVLLVKDPTVSVSTPWAYKRCRELKQSHYLADEAAFEQRRQALRSVDWLQPLRSDLPPPLRNDLQDVVAPETAAVRSALDLLDSVPQSLAVAMSGSGPSCFGLFSDLASCRHAQDQLATQLERAGLKAWSCALRSDGVRIEA.

Lys9 is a catalytic residue. 94–104 (PIGAGLAGGSS) serves as a coordination point for ATP. Asp136 is an active-site residue.

Belongs to the GHMP kinase family. IspE subfamily.

It carries out the reaction 4-CDP-2-C-methyl-D-erythritol + ATP = 4-CDP-2-C-methyl-D-erythritol 2-phosphate + ADP + H(+). The protein operates within isoprenoid biosynthesis; isopentenyl diphosphate biosynthesis via DXP pathway; isopentenyl diphosphate from 1-deoxy-D-xylulose 5-phosphate: step 3/6. Catalyzes the phosphorylation of the position 2 hydroxy group of 4-diphosphocytidyl-2C-methyl-D-erythritol. This chain is 4-diphosphocytidyl-2-C-methyl-D-erythritol kinase, found in Synechococcus sp. (strain CC9605).